The following is a 353-amino-acid chain: ATP-dependent (S)-NAD(P)H-hydrate dehydratase (353 aa).

A YjeF C-terminal domain is found at 18–345 (MLARVRQMVP…DEVHTAFLNL (328 aa)). The tract at residues 95–121 (RSSPPALSSSDSGSSPSRTKSAPDTDP) is disordered. Residues 96-114 (SSPPALSSSDSGSSPSRTK) are compositionally biased toward low complexity. (6S)-NADPHX contacts are provided by residues glycine 143 and 196-202 (NVVEFGR). ATP-binding positions include 241–245 (KGAKD) and 260–269 (GGLKRSGGQG). Residue aspartate 270 participates in (6S)-NADPHX binding.

This sequence belongs to the NnrD/CARKD family. It depends on Mg(2+) as a cofactor.

It localises to the cytoplasm. It catalyses the reaction (6S)-NADHX + ATP = ADP + phosphate + NADH + H(+). It carries out the reaction (6S)-NADPHX + ATP = ADP + phosphate + NADPH + H(+). Functionally, catalyzes the dehydration of the S-form of NAD(P)HX at the expense of ATP, which is converted to ADP. Together with NAD(P)HX epimerase, which catalyzes the epimerization of the S- and R-forms, the enzyme allows the repair of both epimers of NAD(P)HX, a damaged form of NAD(P)H that is a result of enzymatic or heat-dependent hydration. The polypeptide is ATP-dependent (S)-NAD(P)H-hydrate dehydratase (Neurospora crassa (strain ATCC 24698 / 74-OR23-1A / CBS 708.71 / DSM 1257 / FGSC 987)).